A 74-amino-acid chain; its full sequence is Cytochrome c oxidase assembly factor 5 (74 aa).

The region spanning 27 to 65 is the CHCH domain; that stretch reads ESDCVVQEGKSPRQCLKEGYCNSLKYAFFECKRSVLDNR. The Cx10C motif motif lies at 30–41; sequence CVVQEGKSPRQC. 2 disulfide bridges follow: cysteine 30–cysteine 57 and cysteine 41–cysteine 47. Serine 37 bears the Phosphoserine mark. The short motif at 47 to 57 is the Cx9C motif element; that stretch reads CNSLKYAFFEC.

This sequence belongs to the PET191 family.

Its function is as follows. Involved in an early step of the mitochondrial complex IV assembly process. The sequence is that of Cytochrome c oxidase assembly factor 5 (Coa5) from Pongo abelii (Sumatran orangutan).